Reading from the N-terminus, the 591-residue chain is Myelin expression factor 2 (591 aa).

The segment at M1–R92 is disordered. The segment covering E22 to P36 has biased composition (basic and acidic residues). Residue K44 forms a Glycyl lysine isopeptide (Lys-Gly) (interchain with G-Cter in SUMO2) linkage. 2 stretches are compositionally biased toward basic and acidic residues: residues M45–T63 and Y74–G87. 2 RRM domains span residues N91–D169 and S224–K301. 2 positions are modified to omega-N-methylarginine: R397 and R417. At S422 the chain carries Phosphoserine. The 77-residue stretch at N514–N590 folds into the RRM 3 domain.

Monomer. In terms of tissue distribution, highly expressed in the brain.

It is found in the nucleus. Transcriptional repressor of the myelin basic protein gene (MBP). Binds to the proximal MB1 element 5'-TTGTCC-3' of the MBP promoter. Its binding to MB1 and function are inhibited by PURA. The chain is Myelin expression factor 2 (Myef2) from Mus musculus (Mouse).